Here is a 250-residue protein sequence, read N- to C-terminus: Hemocyanin, units C and D (250 aa).

H1 is a binding site for Cu cation. Positions 1-106 (HGSTKWCPSP…RAWIEPVTSA (106 aa)) are unit C. A disulfide bond links C7 and C18. The 2'-(S-cysteinyl)-histidine (Cys-His) cross-link spans 19–21 (CHH). H21 and H143 together coordinate Cu cation. The tract at residues 107–250 (VRIRKNLNDL…DAQDVIYNNH (144 aa)) is unit D. The cysteines at positions 149 and 160 are disulfide-linked. Positions 161–163 (CLH) form a cross-link, 2'-(S-cysteinyl)-histidine (Cys-His). H172 provides a ligand contact to Cu cation.

The protein belongs to the tyrosinase family. Hemocyanin subfamily. As to quaternary structure, decamers of large identical subunits (390 kDa), each containing 8 globular oxygen-binding functional units. It depends on Cu(2+) as a cofactor.

Its function is as follows. Hemocyanins are copper-containing oxygen carriers occurring freely dissolved in the hemolymph of many mollusks and arthropods. The polypeptide is Hemocyanin, units C and D (Sepia officinalis (Common cuttlefish)).